The chain runs to 306 residues: Phospho-N-acetylmuramoyl-pentapeptide-transferase (306 aa).

10 helical membrane passes run 2–22 (IALL…LKYW), 47–67 (SGTP…FLFF), 71–91 (FFIS…DLKL), 105–125 (IFLS…DYKI), 131–151 (LIID…IAVP), 162–182 (GLAG…SFHF), 185–205 (IALE…FNSH), 209–229 (IFMG…LSVV), 236–256 (LIFL…QVFF), and 284–304 (IVWR…VLWY).

The protein belongs to the glycosyltransferase 4 family. MraY subfamily. Mg(2+) is required as a cofactor.

Its subcellular location is the cell inner membrane. The catalysed reaction is UDP-N-acetyl-alpha-D-muramoyl-L-alanyl-gamma-D-glutamyl-meso-2,6-diaminopimeloyl-D-alanyl-D-alanine + di-trans,octa-cis-undecaprenyl phosphate = di-trans,octa-cis-undecaprenyl diphospho-N-acetyl-alpha-D-muramoyl-L-alanyl-D-glutamyl-meso-2,6-diaminopimeloyl-D-alanyl-D-alanine + UMP. It participates in cell wall biogenesis; peptidoglycan biosynthesis. In terms of biological role, catalyzes the initial step of the lipid cycle reactions in the biosynthesis of the cell wall peptidoglycan: transfers peptidoglycan precursor phospho-MurNAc-pentapeptide from UDP-MurNAc-pentapeptide onto the lipid carrier undecaprenyl phosphate, yielding undecaprenyl-pyrophosphoryl-MurNAc-pentapeptide, known as lipid I. The protein is Phospho-N-acetylmuramoyl-pentapeptide-transferase of Dictyoglomus thermophilum (strain ATCC 35947 / DSM 3960 / H-6-12).